The chain runs to 396 residues: NADH-quinone oxidoreductase subunit D (396 aa).

This sequence belongs to the complex I 49 kDa subunit family. As to quaternary structure, NDH-1 is composed of 14 different subunits. Subunits NuoB, C, D, E, F, and G constitute the peripheral sector of the complex.

The protein localises to the cell inner membrane. It carries out the reaction a quinone + NADH + 5 H(+)(in) = a quinol + NAD(+) + 4 H(+)(out). Functionally, NDH-1 shuttles electrons from NADH, via FMN and iron-sulfur (Fe-S) centers, to quinones in the respiratory chain. The immediate electron acceptor for the enzyme in this species is believed to be ubiquinone. Couples the redox reaction to proton translocation (for every two electrons transferred, four hydrogen ions are translocated across the cytoplasmic membrane), and thus conserves the redox energy in a proton gradient. This Bartonella tribocorum (strain CIP 105476 / IBS 506) protein is NADH-quinone oxidoreductase subunit D.